The following is a 403-amino-acid chain: Nucleolar protein 13 (403 aa).

Basic and acidic residues-rich tracts occupy residues Met-1 to Glu-35 and Lys-75 to Gln-97. Disordered regions lie at residues Met-1–Lys-43 and Ile-72–Lys-116. Ser-2 carries the N-acetylserine modification. At Ser-2 the chain carries Phosphoserine. Polar residues predominate over residues Glu-99–Gly-108. Thr-105 bears the Phosphothreonine mark. RRM domains are found at residues Tyr-125 to Asn-219 and Arg-239 to Asp-317. Over residues Glu-313–Asn-329 the composition is skewed to basic and acidic residues. Residues Glu-313–Asp-403 form a disordered region. The segment covering Val-330–Lys-344 has biased composition (polar residues). At Ser-335 the chain carries Phosphoserine. Residues Gly-345 to Arg-361 are compositionally biased toward basic and acidic residues. The segment covering Asp-371–Ala-381 has biased composition (polar residues).

The protein resides in the nucleus. It localises to the nucleolus. The chain is Nucleolar protein 13 (NOP13) from Saccharomyces cerevisiae (strain ATCC 204508 / S288c) (Baker's yeast).